The following is a 387-amino-acid chain: Anhydro-N-acetylmuramic acid kinase (387 aa).

17–24 (GTSMDGVD) contacts ATP.

The protein belongs to the anhydro-N-acetylmuramic acid kinase family.

The catalysed reaction is 1,6-anhydro-N-acetyl-beta-muramate + ATP + H2O = N-acetyl-D-muramate 6-phosphate + ADP + H(+). The protein operates within amino-sugar metabolism; 1,6-anhydro-N-acetylmuramate degradation. It functions in the pathway cell wall biogenesis; peptidoglycan recycling. In terms of biological role, catalyzes the specific phosphorylation of 1,6-anhydro-N-acetylmuramic acid (anhMurNAc) with the simultaneous cleavage of the 1,6-anhydro ring, generating MurNAc-6-P. Is required for the utilization of anhMurNAc either imported from the medium or derived from its own cell wall murein, and thus plays a role in cell wall recycling. This is Anhydro-N-acetylmuramic acid kinase from Burkholderia pseudomallei (strain 1710b).